The chain runs to 390 residues: Putative cyclin-F2-1 (390 aa).

A disordered region spans residues 135-154 (YNGDDDAPAPDDSMASRPQL).

Belongs to the cyclin family. Cyclin F subfamily.

This is Putative cyclin-F2-1 (CycF2-1) from Oryza sativa subsp. japonica (Rice).